A 123-amino-acid chain; its full sequence is Large ribosomal subunit protein uL14 (123 aa).

This sequence belongs to the universal ribosomal protein uL14 family. Part of the 50S ribosomal subunit. Forms a cluster with proteins L3 and L19. In the 70S ribosome, L14 and L19 interact and together make contacts with the 16S rRNA in bridges B5 and B8.

Its function is as follows. Binds to 23S rRNA. Forms part of two intersubunit bridges in the 70S ribosome. The polypeptide is Large ribosomal subunit protein uL14 (Enterobacter sp. (strain 638)).